The sequence spans 282 residues: Probable xyloglucan endotransglucosylase/hydrolase protein 18 (282 aa).

The signal sequence occupies residues 1–26; the sequence is MKLSCGTSFAFLIMFLFAAQSMHVYA. Residues 27 to 218 enclose the GH16 domain; the sequence is GSFHKDVQIH…WSKAPFTAFY (192 aa). Glu104 acts as the Nucleophile in catalysis. Glu108 acts as the Proton donor in catalysis. Residue Glu108 participates in xyloglucan binding. Asn112 carries an N-linked (GlcNAc...) asparagine glycan. Xyloglucan contacts are provided by residues 121–123, 131–133, 197–198, and Gly202; these read HTN, DKE, and HW. A disulfide bond links Cys226 and Cys235. A glycan (N-linked (GlcNAc...) asparagine) is linked at Asn238. Residues Cys267 and Cys281 are joined by a disulfide bond. Arg272 contributes to the xyloglucan binding site.

Belongs to the glycosyl hydrolase 16 family. XTH group 2 subfamily. Post-translationally, contains at least one intrachain disulfide bond essential for its enzymatic activity. Root specific.

The protein resides in the secreted. The protein localises to the cell wall. It localises to the extracellular space. It is found in the apoplast. The enzyme catalyses breaks a beta-(1-&gt;4) bond in the backbone of a xyloglucan and transfers the xyloglucanyl segment on to O-4 of the non-reducing terminal glucose residue of an acceptor, which can be a xyloglucan or an oligosaccharide of xyloglucan.. In terms of biological role, catalyzes xyloglucan endohydrolysis (XEH) and/or endotransglycosylation (XET). Cleaves and religates xyloglucan polymers, an essential constituent of the primary cell wall, and thereby participates in cell wall construction of growing tissues. The sequence is that of Probable xyloglucan endotransglucosylase/hydrolase protein 18 (XTH18) from Arabidopsis thaliana (Mouse-ear cress).